A 267-amino-acid polypeptide reads, in one-letter code: GTP cyclohydrolase FolE2 (267 aa).

The protein belongs to the GTP cyclohydrolase IV family.

The catalysed reaction is GTP + H2O = 7,8-dihydroneopterin 3'-triphosphate + formate + H(+). It participates in cofactor biosynthesis; 7,8-dihydroneopterin triphosphate biosynthesis; 7,8-dihydroneopterin triphosphate from GTP: step 1/1. Converts GTP to 7,8-dihydroneopterin triphosphate. The protein is GTP cyclohydrolase FolE2 of Nitrosomonas eutropha (strain DSM 101675 / C91 / Nm57).